The sequence spans 188 residues: 3-deoxy-D-manno-octulosonate 8-phosphate phosphatase KdsC (188 aa).

2 residues coordinate Mg(2+): aspartate 32 and aspartate 34. Residues aspartate 34, 55 to 59, arginine 63, arginine 78, arginine 86, and lysine 102 each bind substrate; that span reads NVRDG. Aspartate 125 lines the Mg(2+) pocket.

This sequence belongs to the KdsC family. As to quaternary structure, homotetramer. The cofactor is Mg(2+).

It catalyses the reaction 3-deoxy-alpha-D-manno-2-octulosonate-8-phosphate + H2O = 3-deoxy-alpha-D-manno-oct-2-ulosonate + phosphate. Its pathway is carbohydrate biosynthesis; 3-deoxy-D-manno-octulosonate biosynthesis; 3-deoxy-D-manno-octulosonate from D-ribulose 5-phosphate: step 3/3. The protein operates within bacterial outer membrane biogenesis; lipopolysaccharide biosynthesis. Catalyzes the hydrolysis of 3-deoxy-D-manno-octulosonate 8-phosphate (KDO 8-P) to 3-deoxy-D-manno-octulosonate (KDO) and inorganic phosphate. The protein is 3-deoxy-D-manno-octulosonate 8-phosphate phosphatase KdsC of Escherichia coli (strain K12).